The chain runs to 374 residues: Probable quinol oxidase subunit 2 (374 aa).

The signal sequence occupies residues 1-19; it reads MSKFKSLLLMFGTLILLSG. Cys20 is lipidated: N-palmitoyl cysteine. The S-diacylglycerol cysteine moiety is linked to residue Cys20. The next 2 membrane-spanning stretches (helical) occupy residues 43–63 and 82–102; these read SIIF…IFIF and IETI…IPTV. Positions 321 to 374 are disordered; the sequence is MKPMILGNNDPYDNEFKKEEDHNSKEMEKISKSAKDENASKFGSKADNDHGGGH. The span at 334–374 shows a compositional bias: basic and acidic residues; it reads NEFKKEEDHNSKEMEKISKSAKDENASKFGSKADNDHGGGH.

The protein belongs to the cytochrome c oxidase subunit 2 family.

The protein resides in the cell membrane. It carries out the reaction 2 a quinol + O2 = 2 a quinone + 2 H2O. Catalyzes quinol oxidation with the concomitant reduction of oxygen to water. Subunit II transfers the electrons from a quinol to the binuclear center of the catalytic subunit I. The polypeptide is Probable quinol oxidase subunit 2 (qoxA) (Staphylococcus haemolyticus (strain JCSC1435)).